Consider the following 448-residue polypeptide: MKLSHLSLAIISAITLAACGGGNDDKPMPQDPDNGALVEQRNEAIKKKATAYLEDKDGKAPALTKDEEATLSQIDENLFNEYKKKQKELENQASDDEVDPTKTGVVGNLDLGKQASQGTTQYVRGTKSSFDAENNPKEVSSATAILGVEAKTQNPWLTNIVLARKVRADGTVSIMQYLGNDGSDAADFTNVKSLQAQNDHNVVKFSDLKTNKPLDEAKLEAQKKQVDLIIKLYEKIDSSEITTEEKEELEKFVALKEELNAIDIKSPEGYVGLDEKAHKLFSETGASGSDDIIFGDDVPTNNSVLGTADTGSGAIPPVKPIYTSGKPGADATGAGALGLVGMNFKVGGTQEAIQGTEEKSQSSTRVFGRQYNTQSRAERKFNSYADAAVLALSSEKDLANAIAGITDQSELANITADMKNAKINYHLAVKPQKLDYVQYGRVTGNLDP.

The first 20 residues, 1–20 (MKLSHLSLAIISAITLAACG), serve as a signal peptide directing secretion. Residues 87–109 (KELENQASDDEVDPTKTGVVGNL) are disordered.

It belongs to the peptidase S17 family. The cofactor is a divalent metal cation.

Its function is as follows. This enzyme is a chymotrypsin-like serine protease. Degrades a variety of substrates present in the skin and hoof of the sheep, including elastin, keratin, fibrinogen and collagen. It seems to play an important role in the pathogenesis of sheep footrot. The chain is Extracellular serine protease (prvA) from Dichelobacter nodosus (Bacteroides nodosus).